A 336-amino-acid chain; its full sequence is Anthranilate phosphoribosyltransferase (336 aa).

5-phospho-alpha-D-ribose 1-diphosphate contacts are provided by residues glycine 78, 81 to 82 (GD), threonine 86, 88 to 91 (NVST), 106 to 114 (KHGNYSVSS), and serine 118. Glycine 78 serves as a coordination point for anthranilate. Serine 90 lines the Mg(2+) pocket. Position 109 (asparagine 109) interacts with anthranilate. Arginine 164 is an anthranilate binding site. Positions 222 and 223 each coordinate Mg(2+).

Belongs to the anthranilate phosphoribosyltransferase family. As to quaternary structure, homodimer. The cofactor is Mg(2+).

The enzyme catalyses N-(5-phospho-beta-D-ribosyl)anthranilate + diphosphate = 5-phospho-alpha-D-ribose 1-diphosphate + anthranilate. It participates in amino-acid biosynthesis; L-tryptophan biosynthesis; L-tryptophan from chorismate: step 2/5. Functionally, catalyzes the transfer of the phosphoribosyl group of 5-phosphorylribose-1-pyrophosphate (PRPP) to anthranilate to yield N-(5'-phosphoribosyl)-anthranilate (PRA). The sequence is that of Anthranilate phosphoribosyltransferase from Halobacterium salinarum (strain ATCC 29341 / DSM 671 / R1).